The chain runs to 439 residues: Tol-Pal system protein TolB (439 aa).

Positions 1–22 (MKKPLRWLAALTALLLPLSALA) are cleaved as a signal peptide.

The protein belongs to the TolB family. The Tol-Pal system is composed of five core proteins: the inner membrane proteins TolA, TolQ and TolR, the periplasmic protein TolB and the outer membrane protein Pal. They form a network linking the inner and outer membranes and the peptidoglycan layer.

The protein localises to the periplasm. Part of the Tol-Pal system, which plays a role in outer membrane invagination during cell division and is important for maintaining outer membrane integrity. This chain is Tol-Pal system protein TolB, found in Xanthomonas axonopodis pv. citri (strain 306).